The sequence spans 321 residues: Serine/threonine-protein phosphatase PP1 (321 aa).

Residues D60, H62, D88, and N120 each coordinate Mn(2+). H121 acts as the Proton donor in catalysis. Mn(2+) is bound by residues H169 and H244. The tract at residues 298-321 (KKLTNDSNGRPLTPPRNKQQKPKK) is disordered.

This sequence belongs to the PPP phosphatase family. As to quaternary structure, interacts with dpiA. Requires Mn(2+) as cofactor.

It carries out the reaction O-phospho-L-seryl-[protein] + H2O = L-seryl-[protein] + phosphate. The enzyme catalyses O-phospho-L-threonyl-[protein] + H2O = L-threonyl-[protein] + phosphate. With respect to regulation, inhibited by okadaic acid, tautomycin and calyculin A. Inhibited by phosphatase inhibitor 2 (dpiA). Its function is as follows. Protein phosphatase activity in vitro. In Dictyostelium discoideum (Social amoeba), this protein is Serine/threonine-protein phosphatase PP1 (pppB).